Consider the following 111-residue polypeptide: Protein RnfH (111 aa).

Positions 88–111 (RRRRVQKTRESGTREGQKWLRGGA) are disordered. Residues 94–105 (KTRESGTREGQK) show a composition bias toward basic and acidic residues.

This sequence belongs to the UPF0125 (RnfH) family.

The sequence is that of Protein RnfH from Cupriavidus pinatubonensis (strain JMP 134 / LMG 1197) (Cupriavidus necator (strain JMP 134)).